A 112-amino-acid polypeptide reads, in one-letter code: UPF0145 protein MmarC6_1828 (112 aa).

It belongs to the UPF0145 family.

This Methanococcus maripaludis (strain C6 / ATCC BAA-1332) protein is UPF0145 protein MmarC6_1828.